Here is a 312-residue protein sequence, read N- to C-terminus: Phospho-N-acetylmuramoyl-pentapeptide-transferase (312 aa).

9 helical membrane passes run 1–21 (MMVV…HYSK), 48–68 (GVAF…FGGI), 76–96 (EVMI…DDFL), 115–135 (FPLQ…LASH), 140–160 (GFMS…FVMV), 165–185 (AFNF…IVLL), 214–234 (VFMG…AYAL), 238–258 (VWLL…VVIQ), and 289–309 (VTLR…WLMG).

Belongs to the glycosyltransferase 4 family. MraY subfamily. Requires Mg(2+) as cofactor.

It is found in the cell membrane. It carries out the reaction UDP-N-acetyl-alpha-D-muramoyl-L-alanyl-gamma-D-glutamyl-meso-2,6-diaminopimeloyl-D-alanyl-D-alanine + di-trans,octa-cis-undecaprenyl phosphate = di-trans,octa-cis-undecaprenyl diphospho-N-acetyl-alpha-D-muramoyl-L-alanyl-D-glutamyl-meso-2,6-diaminopimeloyl-D-alanyl-D-alanine + UMP. The protein operates within cell wall biogenesis; peptidoglycan biosynthesis. In terms of biological role, catalyzes the initial step of the lipid cycle reactions in the biosynthesis of the cell wall peptidoglycan: transfers peptidoglycan precursor phospho-MurNAc-pentapeptide from UDP-MurNAc-pentapeptide onto the lipid carrier undecaprenyl phosphate, yielding undecaprenyl-pyrophosphoryl-MurNAc-pentapeptide, known as lipid I. The polypeptide is Phospho-N-acetylmuramoyl-pentapeptide-transferase (Deinococcus radiodurans (strain ATCC 13939 / DSM 20539 / JCM 16871 / CCUG 27074 / LMG 4051 / NBRC 15346 / NCIMB 9279 / VKM B-1422 / R1)).